Here is a 478-residue protein sequence, read N- to C-terminus: Cytochrome c-552 (478 aa).

Positions 1 to 26 (MTRIKINARRIFSLLIPFFFFTSVHA) are cleaved as a signal peptide. H94 provides a ligand contact to heme c. C122, C125, and K126 together coordinate heme. Residues C160, C163, H164, C209, C212, and H213 each coordinate heme c. 4 residues coordinate Ca(2+): E215, Y216, K261, and Q263. Substrate is bound at residue Y216. Residue H264 coordinates substrate. Positions 275, 282, 285, 286, 301, 314, 317, 318, and 393 each coordinate heme c.

Belongs to the cytochrome c-552 family. It depends on Ca(2+) as a cofactor. Requires heme c as cofactor.

It is found in the periplasm. The enzyme catalyses 6 Fe(III)-[cytochrome c] + NH4(+) + 2 H2O = 6 Fe(II)-[cytochrome c] + nitrite + 8 H(+). It functions in the pathway nitrogen metabolism; nitrate reduction (assimilation). Functionally, catalyzes the reduction of nitrite to ammonia, consuming six electrons in the process. The protein is Cytochrome c-552 of Escherichia coli O17:K52:H18 (strain UMN026 / ExPEC).